The primary structure comprises 324 residues: Mitochondrial oxaloacetate transport protein (324 aa).

3 Solcar repeats span residues 20–111 (ISKF…IRSS), 126–218 (QSVG…AKNI), and 227–312 (DGPA…TMKL). Transmembrane regions (helical) follow at residues 26–46 (FVAG…IELI), 79–99 (GIKG…GLNG), 132–152 (VFSG…LFLV), 193–213 (GIDA…PIYN), 233–253 (LTAS…WDVI), and 284–305 (LYKG…CLTF).

It belongs to the mitochondrial carrier (TC 2.A.29) family.

The protein resides in the mitochondrion inner membrane. The catalysed reaction is a dicarboxylate(in) + sulfate(out) = a dicarboxylate(out) + sulfate(in). It catalyses the reaction (2S)-2-isopropylmalate(in) + sulfate(out) = (2S)-2-isopropylmalate(out) + sulfate(in). The enzyme catalyses (2R,3S)-3-isopropylmalate(in) + sulfate(out) = (2R,3S)-3-isopropylmalate(out) + sulfate(in). It carries out the reaction malonate(in) + sulfate(out) = malonate(out) + sulfate(in). The catalysed reaction is oxaloacetate(in) + sulfate(out) = oxaloacetate(out) + sulfate(in). It catalyses the reaction thiosulfate(in) + sulfate(out) = thiosulfate(out) + sulfate(in). Its activity is regulated as follows. Inhibited by alpha-keto isocaproate, an intermediate of leucine biosynthesis pathway. Its function is as follows. Antiporter that exchanges dicarboxylates and sulfur oxoanions across the inner membrane of mitochondria. Exports alpha-isopropylmalate from mitochondrial matrix to the cytosol, where it serves as a precursor for leucine biosynthesis. In Saccharomyces cerevisiae (strain ATCC 204508 / S288c) (Baker's yeast), this protein is Mitochondrial oxaloacetate transport protein (OAC1).